Here is a 307-residue protein sequence, read N- to C-terminus: Protoheme IX farnesyltransferase (307 aa).

9 consecutive transmembrane segments (helical) span residues 28-48, 50-70, 99-117, 121-138, 146-166, 173-193, 219-239, 241-261, and 278-298; these read LVIF…NPIL, FTAI…NQWW, FGIL…AINW, IILA…TIWL, IVIG…AVTG, VLLF…LALF, ILVY…IGAT, AIYG…SVPV, and LFGF…ADRY.

The protein belongs to the UbiA prenyltransferase family. Protoheme IX farnesyltransferase subfamily.

It is found in the cell inner membrane. The catalysed reaction is heme b + (2E,6E)-farnesyl diphosphate + H2O = Fe(II)-heme o + diphosphate. It participates in porphyrin-containing compound metabolism; heme O biosynthesis; heme O from protoheme: step 1/1. Converts heme B (protoheme IX) to heme O by substitution of the vinyl group on carbon 2 of heme B porphyrin ring with a hydroxyethyl farnesyl side group. The chain is Protoheme IX farnesyltransferase from Erythrobacter litoralis (strain HTCC2594).